The sequence spans 188 residues: Elongation factor P (188 aa).

The protein belongs to the elongation factor P family.

The protein localises to the cytoplasm. It functions in the pathway protein biosynthesis; polypeptide chain elongation. Its function is as follows. Involved in peptide bond synthesis. Stimulates efficient translation and peptide-bond synthesis on native or reconstituted 70S ribosomes in vitro. Probably functions indirectly by altering the affinity of the ribosome for aminoacyl-tRNA, thus increasing their reactivity as acceptors for peptidyl transferase. The chain is Elongation factor P from Leptospira biflexa serovar Patoc (strain Patoc 1 / Ames).